The following is an 83-amino-acid chain: Homeobox protein DLX-2 (83 aa).

Polar residues predominate over residues 1–14 (STATDSSYYTNQQH). Disordered regions lie at residues 1 to 27 (STATDSSYYTNQQHPAGGGGGGASPYA) and 63 to 83 (PYGTSSSPVNNEPDKEDLEPE).

It belongs to the distal-less homeobox family. As to quaternary structure, interacts (via homeobox DNA-binding domain) with POU4F2; this interaction enhances retinal ganglion cell (RGC) differentiation.

Its subcellular location is the nucleus. Its function is as follows. Acts as a transcriptional activator. Activates transcription of CGA/alpha-GSU, via binding to the downstream activin regulatory element (DARE) in the gene promoter. Plays a role in terminal differentiation of interneurons, such as amacrine and bipolar cells in the developing retina. Likely to play a regulatory role in the development of the ventral forebrain. May play a role in craniofacial patterning and morphogenesis. This Rattus norvegicus (Rat) protein is Homeobox protein DLX-2 (Dlx2).